Reading from the N-terminus, the 337-residue chain is Draxin (337 aa).

A signal peptide spans 1-24; sequence MLLLALLLLLELSLAGSLGPGSSA. Disordered stretches follow at residues 36–67, 107–133, and 234–261; these read GPALWTPQASHHRRRGLGKKERGPGTPGWTQD, RPYPEKETQAPGSERVKKRGREHKRRK, and WPSTRKKEKHRGKLSSDGNETSPAKGEP. Basic residues-rich tracts occupy residues 122–133 and 237–246; these read VKKRGREHKRRK and TRKKEKHRGK. N-linked (GlcNAc...) asparagine glycosylation occurs at asparagine 252.

Belongs to the draxin family. In terms of assembly, interacts with LRP6.

It is found in the secreted. In terms of biological role, chemorepulsive axon guidance protein required for the development of spinal cord and forebrain commissures. Acts as a chemorepulsive guidance protein for commissural axons during development. Able to inhibit or repel neurite outgrowth from dorsal spinal cord. Inhibits the stabilization of cytosolic beta-catenin (CTNNB1) via its interaction with LRP6, thereby acting as an antagonist of Wnt signaling pathway. The polypeptide is Draxin (Bos taurus (Bovine)).